The following is a 393-amino-acid chain: 4-hydroxyphenylpyruvate dioxygenase (393 aa).

2 consecutive VOC domains span residues 17–148 (AFDH…LLER) and 179–339 (FLDH…IFSK). Fe cation-binding residues include His182, His267, and Glu350.

Belongs to the 4HPPD family. It depends on Fe cation as a cofactor. Expressed in the hypodermis and intestine.

The enzyme catalyses 3-(4-hydroxyphenyl)pyruvate + O2 = homogentisate + CO2. Its pathway is amino-acid degradation; L-phenylalanine degradation; acetoacetate and fumarate from L-phenylalanine: step 3/6. In terms of biological role, key enzyme in the degradation of tyrosine. This Caenorhabditis elegans protein is 4-hydroxyphenylpyruvate dioxygenase.